Here is a 178-residue protein sequence, read N- to C-terminus: N-alpha-acetyltransferase 80 (178 aa).

An N-acetyltransferase domain is found at 26-178 (VPIHNYPELM…AKKKYMKKVL (153 aa)). Residues R48, 53 to 56 (RMRS), N88, and S98 contribute to the substrate site. Acetyl-CoA contacts are provided by residues 99–101 (VVV) and 107–112 (GQGFGK). Position 134 (S134) interacts with substrate. Residue Q138 participates in acetyl-CoA binding.

This sequence belongs to the acetyltransferase family.

It catalyses the reaction N-terminal L-aspartyl-L-aspartyl-L-aspartyl-[protein] + acetyl-CoA = N-terminal N-acetyl-L-aspartyl-L-aspartyl-L-aspartyl-[protein] + CoA + H(+). The catalysed reaction is N-terminal L-glutamyl-L-glutamyl-L-glutamyl-[protein] + acetyl-CoA = N-terminal N-acetyl-L-glutamyl-L-glutamyl-L-glutamyl-[protein] + CoA + H(+). In terms of biological role, N-alpha-acetyltransferase that acetylates the amino terminal acidic residue of proteins devoid of initiator methionine. Preferentially acts on proteins starting with Asp-Asp-Asp and Glu-Glu-Glu sequences. In vitro, shows high activity towards N-terminal sequences starting with Met-Asp-Glu-Leu, Met-Glu-Glu-Glu and Met-Asp-Asp-Asp. The chain is N-alpha-acetyltransferase 80 from Drosophila melanogaster (Fruit fly).